Consider the following 248-residue polypeptide: Probable transcriptional regulatory protein Plav_2114 (248 aa).

It belongs to the TACO1 family.

Its subcellular location is the cytoplasm. The sequence is that of Probable transcriptional regulatory protein Plav_2114 from Parvibaculum lavamentivorans (strain DS-1 / DSM 13023 / NCIMB 13966).